Here is a 104-residue protein sequence, read N- to C-terminus: Circadian clock oscillator protein KaiB (104 aa).

The protein belongs to the KaiB family. The KaiABC complex composition changes during the circadian cycle to control KaiC phosphorylation. Complexes KaiC(6), KaiA(2-4):KaiC(6), KaiB(6):KaiC(6) and KaiC(6):KaiB(6):KaiA(12) are among the most important forms, many form cooperatively. Undergoes a major conformational rearrangment; in the free state forms homotetramers as a dimer of dimers. When bound to the CI domain of KaiC switches to a monomeric thioredoxin-fold (KaiB(fs)). KaiB(fs) binds CikA, leading it to dephosphorylate phospho-RpaA.

Functionally, key component of the KaiABC oscillator complex, which constitutes the main circadian regulator in cyanobacteria. Complex composition changes during the circadian cycle to control KaiC phosphorylation. KaiA stimulates KaiC autophosphorylation, while KaiB sequesters KaiA, leading to KaiC autodephosphorylation. Phospho-Ser-431 KaiC accumulation triggers binding of KaiB to form the KaiB(6):KaiC(6) complex, leading to changes in output regulators CikA and SasA. KaiB switches to a thioredoxin-like fold (KaiB(fs)) when bound to KaiC. KaiB(6):KaiC(6) formation exposes a site for KaiA binding that sequesters KaiA from KaiC, making the KaiC(6):KaiB(6):KaiA(12) complex that results in KaiC autodephosphorylation. Its function is as follows. A metamorphic protein which reversibly switches between an inactive tetrameric fold and a rare, thioredoxin-like monomeric fold (KaiB(fs)). KaiB(fs) binds phospho-KaiC, KaiA and CikA. KaiA and CikA compete for binding to KaiB(fs), and KaiB(fs) and SasA compete for binding to KaiC, thus the clock oscillator and output signal pathway are tightly coupled. This chain is Circadian clock oscillator protein KaiB, found in Parasynechococcus marenigrum (strain WH8102).